Here is a 260-residue protein sequence, read N- to C-terminus: 3'-5' ssDNA/RNA exonuclease TatD (260 aa).

Glu91, His127, and His152 together coordinate a divalent metal cation.

Belongs to the metallo-dependent hydrolases superfamily. TatD-type hydrolase family. TatD subfamily. In terms of assembly, monomer. It depends on Mg(2+) as a cofactor. Requires Mn(2+) as cofactor.

The protein localises to the cytoplasm. Its function is as follows. 3'-5' exonuclease that prefers single-stranded DNA and RNA. May play a role in the H(2)O(2)-induced DNA damage repair. This Escherichia coli (strain K12) protein is 3'-5' ssDNA/RNA exonuclease TatD.